A 243-amino-acid chain; its full sequence is Orotidine 5'-phosphate decarboxylase (243 aa).

Residues aspartate 12, lysine 34, 61–70, threonine 125, arginine 187, glutamine 196, glycine 216, and arginine 217 contribute to the substrate site; that span reads DLKFHDIPNT. Catalysis depends on lysine 63, which acts as the Proton donor.

It belongs to the OMP decarboxylase family. Type 1 subfamily. Homodimer.

The enzyme catalyses orotidine 5'-phosphate + H(+) = UMP + CO2. It participates in pyrimidine metabolism; UMP biosynthesis via de novo pathway; UMP from orotate: step 2/2. Functionally, catalyzes the decarboxylation of orotidine 5'-monophosphate (OMP) to uridine 5'-monophosphate (UMP). The protein is Orotidine 5'-phosphate decarboxylase of Heliobacterium modesticaldum (strain ATCC 51547 / Ice1).